Consider the following 907-residue polypeptide: Glutamate receptor 1 (907 aa).

An N-terminal signal peptide occupies residues 1 to 18 (MPYIFAFFCTGFLGAVVG). Over 19-536 (ANFPNNIQIG…GVFSFLDPLA (518 aa)) the chain is Extracellular. N63, N249, N257, N363, N401, and N406 each carry an N-linked (GlcNAc...) asparagine glycan. C75 and C323 form a disulfide bridge. Residues P492, T494, and R499 each coordinate L-glutamate. Residues 537 to 557 (YEIWMCIVFAYIGVSVVLFLV) form a helical membrane-spanning segment. The Cytoplasmic segment spans residues 558–584 (SRFSPYEWHSEEFEEGRDQTTSDQSNE). Residues 585-600 (FGIFNSLWFSLGAFMQ) constitute an intramembrane region (helical; Pore-forming). An intramembrane segment occupies 601-603 (QGC). The S-palmitoyl cysteine moiety is linked to residue C603. The Cytoplasmic portion of the chain corresponds to 604–609 (DISPRS). Residues 610–630 (LSGRIVGGVWWFFTLIIISSY) form a helical membrane-spanning segment. The Extracellular portion of the chain corresponds to 631–805 (TANLAAFLTV…DKTSALSLSN (175 aa)). S645 is modified (phosphoserine). L-glutamate-binding residues include S668 and T669. S710 is modified (phosphoserine; by PKC). E719 provides a ligand contact to L-glutamate. C732 and C787 form a disulfide bridge. A helical transmembrane segment spans residues 806–826 (VAGVFYILIGGLGLAMLVALI). Residues 827-907 (EFCYKSRSES…SGMPLGATGL (81 aa)) are Cytoplasmic-facing. C829 is lipidated: S-palmitoyl cysteine. S849 is subject to Phosphoserine; by PKC, PKA and CAMK2. The disordered stretch occupies residues 857-881 (STLPRNSGAGASGGGGSGENGRVVS). Phosphoserine; by PKC, PKA and PKG/PRKG2 is present on S863. Over residues 866-875 (GASGGGGSGE) the composition is skewed to gly residues. The PDZ-binding motif lies at 904 to 907 (ATGL).

Belongs to the glutamate-gated ion channel (TC 1.A.10.1) family. GRIA1 subfamily. In terms of assembly, homotetramer or heterotetramer of pore-forming glutamate receptor subunits; heteromeric assembly can be the result of both receptor subtype and flip-flop forms and according the composition, one partner can be dominant with respect to the fast desensitizing current component, whereas the other can determine the steady-state component. Tetramers may be formed by the dimerization of dimers. Found in a complex with GRIA2, GRIA3, GRIA4, CNIH2, CNIH3, CACNG2, CACNG3, CACNG4, CACNG5, CACNG7 and CACNG8. Interacts with HIP1 and RASGRF2. Interacts with SYNDIG1 and GRIA2. Interacts with DLG1 (via C-terminus). Interacts with LRFN1. Interacts with PRKG2. Interacts with CNIH2 and CACNG2. Interacts with CACNG5; this interaction modulates the gating. Interacts (via C-terminus) with PDLIM4 (via LIM domain); this interaction as well as the interaction of PDLIM4 with alpha-actinin is required for their colocalization in early endosomes. Interacts with SNX27 (via PDZ domain); the interaction is required for recycling to the plasma membrane when endocytosed and prevent degradation in lysosomes. Interacts (via PDZ-binding motif) with SHANK3 (via PDZ domain). Interacts with CACNG3; associates GRIA1 with the adapter protein complex 4 (AP-4) to target GRIA1 to the somatodendritic compartment of neurons. Interacts with CACNG2; this interaction mediates traffick to the plasma membrane and modulation of desensitization. Interaction with CNIH2 and CNIH3; this interaction promotes expression at the plasma membrane and extensively modulates their gating properties by slowing deactivation and desensitization kinetics. Found in a complex with GRIA2, GRIA3, GRIA4, DLG4, CACNG8 and CNIH2. In terms of processing, phosphorylated at Ser-645. Phosphorylated at Ser-710 by PKC. Phosphorylated at Ser-849 by PKC, PKA and CAMK2. Phosphorylated at Ser-863 by PKC, PKA and PRKG2. Phosphorylation of Ser-863 is reduced by induction of long-term depression and increased by induction of long-term potentiation. Palmitoylated. Depalmitoylated by CPT1C and upon L-glutamate stimulation. ZDHHC3/GODZ specifically palmitoylates Cys-603, which leads to Golgi retention and decreased cell surface expression. In contrast, Cys-829 palmitoylation does not affect cell surface expression but regulates stimulation-dependent endocytosis. Detected in cerebellum (at protein level).

Its subcellular location is the cell membrane. It localises to the endoplasmic reticulum membrane. It is found in the postsynaptic cell membrane. The protein resides in the postsynaptic density membrane. The protein localises to the cell projection. Its subcellular location is the dendrite. It localises to the dendritic spine. It is found in the early endosome membrane. The protein resides in the recycling endosome membrane. The protein localises to the presynapse. Its subcellular location is the synapse. It carries out the reaction Ca(2+)(in) = Ca(2+)(out). It catalyses the reaction Na(+)(in) = Na(+)(out). The enzyme catalyses Mg(2+)(in) = Mg(2+)(out). The catalysed reaction is Li(+)(in) = Li(+)(out). It carries out the reaction K(+)(in) = K(+)(out). It catalyses the reaction Sr(2+)(in) = Sr(2+)(out). With respect to regulation, glutamate-gated receptor activity inhibited by DNQX (6,7-dinitroquinoxaline-2,3-dione). In terms of biological role, ionotropic glutamate receptor that functions as a ligand-gated cation channel, gated by L-glutamate and glutamatergic agonists such as alpha-amino-3-hydroxy-5-methyl-4-isoxazolepropionic acid (AMPA), quisqualic acid, and kainic acid. L-glutamate acts as an excitatory neurotransmitter at many synapses in the central nervous system. Binding of the excitatory neurotransmitter L-glutamate induces a conformation change, leading to the opening of the cation channel, and thereby converts the chemical signal to an electrical impulse upon entry of monovalent and divalent cations such as sodium and calcium. The receptor then desensitizes rapidly and enters in a transient inactive state, characterized by the presence of bound agonist. In the presence of CACNG2 or CACNG4 or CACNG7 or CACNG8, shows resensitization which is characterized by a delayed accumulation of current flux upon continued application of L-glutamate. Resensitization is blocked by CNIH2 through interaction with CACNG8 in the CACNG8-containing AMPA receptors complex. Calcium (Ca(2+)) permeability depends on subunits composition and, heteromeric channels containing edited GRIA2 subunit are calcium-impermeable. Also permeable to other divalents cations such as strontium(2+) and magnesium(2+) and monovalent cations such as potassium(1+) and lithium(1+). The chain is Glutamate receptor 1 from Rattus norvegicus (Rat).